We begin with the raw amino-acid sequence, 117 residues long: DNA-directed RNA polymerase subunit omega (117 aa).

The protein belongs to the RNA polymerase subunit omega family. The RNAP catalytic core consists of 2 alpha, 1 beta, 1 beta' and 1 omega subunit. When a sigma factor is associated with the core the holoenzyme is formed, which can initiate transcription.

It catalyses the reaction RNA(n) + a ribonucleoside 5'-triphosphate = RNA(n+1) + diphosphate. Its function is as follows. Promotes RNA polymerase assembly. Latches the N- and C-terminal regions of the beta' subunit thereby facilitating its interaction with the beta and alpha subunits. The sequence is that of DNA-directed RNA polymerase subunit omega from Cereibacter sphaeroides (strain ATCC 17025 / ATH 2.4.3) (Rhodobacter sphaeroides).